A 437-amino-acid polypeptide reads, in one-letter code: tRNA(Ile)-lysidine synthase (437 aa).

Residue 22–27 (SGGLDS) participates in ATP binding.

Belongs to the tRNA(Ile)-lysidine synthase family.

Its subcellular location is the cytoplasm. It catalyses the reaction cytidine(34) in tRNA(Ile2) + L-lysine + ATP = lysidine(34) in tRNA(Ile2) + AMP + diphosphate + H(+). Functionally, ligates lysine onto the cytidine present at position 34 of the AUA codon-specific tRNA(Ile) that contains the anticodon CAU, in an ATP-dependent manner. Cytidine is converted to lysidine, thus changing the amino acid specificity of the tRNA from methionine to isoleucine. This chain is tRNA(Ile)-lysidine synthase, found in Xylella fastidiosa (strain Temecula1 / ATCC 700964).